The primary structure comprises 477 residues: Stromelysin-1 (477 aa).

The signal sequence occupies residues Met-1 to Ser-17. Residues Tyr-18–Gly-99 constitute a propeptide, activation peptide. The Cysteine switch signature appears at Pro-90–Val-97. A Zn(2+)-binding site is contributed by Cys-92. Ca(2+) contacts are provided by Asp-124 and Asp-158. The Zn(2+) site is built by His-168 and Asp-170. Asp-175, Gly-176, Gly-178, and Val-180 together coordinate Ca(2+). His-183 contacts Zn(2+). Residues Gly-190, Asn-192, and Asp-194 each contribute to the Ca(2+) site. His-196 provides a ligand contact to Zn(2+). Residues Asp-198, Asp-199, and Glu-201 each contribute to the Ca(2+) site. His-218 contributes to the Zn(2+) binding site. Glu-219 is an active-site residue. Zn(2+) is bound by residues His-222 and His-228. Hemopexin repeat units follow at residues Ser-287–Leu-336, Pro-337–Ala-383, Val-385–Val-433, and Asp-434–Cys-477. A disulfide bridge links Cys-290 with Cys-477. Ca(2+) is bound at residue Asp-297. 2 residues coordinate Ca(2+): Asp-389 and Asp-438.

The protein belongs to the peptidase M10A family. Ca(2+) serves as cofactor. It depends on Zn(2+) as a cofactor.

Its subcellular location is the secreted. It is found in the extracellular space. The protein localises to the extracellular matrix. It carries out the reaction Preferential cleavage where P1', P2' and P3' are hydrophobic residues.. Metalloproteinase with a rather broad substrate specificity that can degrade fibronectin, laminin, gelatins of type I, III, IV, and V; collagens III, IV, X, and IX, and cartilage proteoglycans. Activates different molecules including growth factors, plasminogen or other matrix metalloproteinases such as MMP9. Once released into the extracellular matrix (ECM), the inactive pro-enzyme is activated by the plasmin cascade signaling pathway. Also acts intracellularly. For example, in dopaminergic neurons, gets activated by the serine protease HTRA2 upon stress and plays a pivotal role in DA neuronal degeneration by mediating microglial activation and alpha-synuclein/SNCA cleavage. In addition, plays a role in immune response and possesses antiviral activity against various viruses. Mechanistically, translocates from the cytoplasm into the cell nucleus upon virus infection to influence NF-kappa-B activities. The protein is Stromelysin-1 (Mmp3) of Mus musculus (Mouse).